A 232-amino-acid chain; its full sequence is Probable metallo-hydrolase M6_Spy0554 (232 aa).

7 residues coordinate Zn(2+): His75, His77, Asp79, His80, His155, Asp174, and His215.

The cofactor is Zn(2+).

The protein is Probable metallo-hydrolase M6_Spy0554 of Streptococcus pyogenes serotype M6 (strain ATCC BAA-946 / MGAS10394).